The primary structure comprises 117 residues: Venom protein TxLP11 (117 aa).

An N-terminal signal peptide occupies residues 1–22; the sequence is MNTKTLIVVFLVCLLVSEVVLA.

Post-translationally, contains 4 disulfide bonds. As to expression, expressed by the venom gland.

The protein localises to the secreted. This is Venom protein TxLP11 from Lychas mucronatus (Chinese swimming scorpion).